Reading from the N-terminus, the 59-residue chain is Photosystem II reaction center protein K (59 aa).

Positions 1 to 22 are excised as a propeptide; that stretch reads MILYSHLSTLIDIDLSNNIFLA. Residues 30–50 traverse the membrane as a helical segment; that stretch reads IFDPLVDVMPVIPVFFLLLAF.

The protein belongs to the PsbK family. As to quaternary structure, PSII is composed of 1 copy each of membrane proteins PsbA, PsbB, PsbC, PsbD, PsbE, PsbF, PsbH, PsbI, PsbJ, PsbK, PsbL, PsbM, PsbT, PsbX, PsbY, PsbZ, Psb30/Ycf12, at least 3 peripheral proteins of the oxygen-evolving complex and a large number of cofactors. It forms dimeric complexes.

It is found in the plastid. The protein resides in the chloroplast thylakoid membrane. In terms of biological role, one of the components of the core complex of photosystem II (PSII). PSII is a light-driven water:plastoquinone oxidoreductase that uses light energy to abstract electrons from H(2)O, generating O(2) and a proton gradient subsequently used for ATP formation. It consists of a core antenna complex that captures photons, and an electron transfer chain that converts photonic excitation into a charge separation. The protein is Photosystem II reaction center protein K of Chara vulgaris (Common stonewort).